Reading from the N-terminus, the 142-residue chain is Large ribosomal subunit protein mL42 (142 aa).

The transit peptide at 1 to 32 directs the protein to the mitochondrion; sequence MAVAAVKWVMSKRTILKHLFPVQNGALYCVCH.

It belongs to the mitochondrion-specific ribosomal protein mL42 family. In terms of assembly, component of the mitochondrial large ribosomal subunit (mt-LSU). Mature mammalian 55S mitochondrial ribosomes consist of a small (28S) and a large (39S) subunit. The 28S small subunit contains a 12S ribosomal RNA (12S mt-rRNA) and 30 different proteins. The 39S large subunit contains a 16S rRNA (16S mt-rRNA), a copy of mitochondrial valine transfer RNA (mt-tRNA(Val)), which plays an integral structural role, and 52 different proteins.

It is found in the mitochondrion. This chain is Large ribosomal subunit protein mL42 (MRPL42), found in Homo sapiens (Human).